Here is a 212-residue protein sequence, read N- to C-terminus: Ribosomal RNA small subunit methyltransferase G (212 aa).

Residues G80, L85, 131-132 (AE), and R146 contribute to the S-adenosyl-L-methionine site.

Belongs to the methyltransferase superfamily. RNA methyltransferase RsmG family.

Its subcellular location is the cytoplasm. The catalysed reaction is guanosine(527) in 16S rRNA + S-adenosyl-L-methionine = N(7)-methylguanosine(527) in 16S rRNA + S-adenosyl-L-homocysteine. Functionally, specifically methylates the N7 position of guanine in position 527 of 16S rRNA. In Xylella fastidiosa (strain M23), this protein is Ribosomal RNA small subunit methyltransferase G.